The chain runs to 160 residues: Lipoprotein signal peptidase (160 aa).

The next 3 helical transmembrane spans lie at 13–33 (IYITTIIFILILDISSKRLII), 72–92 (WFLSTVSILTILVMTRIITKL), and 104–124 (SLIIAGATGNLIDRIFYGFVV). Active-site residues include D125 and D143. The chain crosses the membrane as a helical span at residues 134–154 (WHFATFNIADCSIFIGIIILM).

It belongs to the peptidase A8 family.

It is found in the cell inner membrane. It catalyses the reaction Release of signal peptides from bacterial membrane prolipoproteins. Hydrolyzes -Xaa-Yaa-Zaa-|-(S,diacylglyceryl)Cys-, in which Xaa is hydrophobic (preferably Leu), and Yaa (Ala or Ser) and Zaa (Gly or Ala) have small, neutral side chains.. It functions in the pathway protein modification; lipoprotein biosynthesis (signal peptide cleavage). Functionally, this protein specifically catalyzes the removal of signal peptides from prolipoproteins. The polypeptide is Lipoprotein signal peptidase (Buchnera aphidicola subsp. Acyrthosiphon pisum (strain APS) (Acyrthosiphon pisum symbiotic bacterium)).